A 731-amino-acid chain; its full sequence is 1,4-alpha-glucan branching enzyme GlgB (731 aa).

Asp412 serves as the catalytic Nucleophile. The active-site Proton donor is the Glu465.

This sequence belongs to the glycosyl hydrolase 13 family. GlgB subfamily. Monomer.

It catalyses the reaction Transfers a segment of a (1-&gt;4)-alpha-D-glucan chain to a primary hydroxy group in a similar glucan chain.. Its pathway is glycan biosynthesis; glycogen biosynthesis. Functionally, catalyzes the formation of the alpha-1,6-glucosidic linkages in glycogen by scission of a 1,4-alpha-linked oligosaccharide from growing alpha-1,4-glucan chains and the subsequent attachment of the oligosaccharide to the alpha-1,6 position. This chain is 1,4-alpha-glucan branching enzyme GlgB, found in Bordetella bronchiseptica (strain ATCC BAA-588 / NCTC 13252 / RB50) (Alcaligenes bronchisepticus).